The following is a 194-amino-acid chain: Fe/S biogenesis protein NfuA (194 aa).

[4Fe-4S] cluster contacts are provided by Cys-151 and Cys-154.

Belongs to the NfuA family. In terms of assembly, homodimer. Requires [4Fe-4S] cluster as cofactor.

Its function is as follows. Involved in iron-sulfur cluster biogenesis. Binds a 4Fe-4S cluster, can transfer this cluster to apoproteins, and thereby intervenes in the maturation of Fe/S proteins. Could also act as a scaffold/chaperone for damaged Fe/S proteins. This Vibrio vulnificus (strain CMCP6) protein is Fe/S biogenesis protein NfuA.